The primary structure comprises 170 residues: Lipoprotein signal peptidase (170 aa).

3 consecutive transmembrane segments (helical) span residues 13–33 (IFIS…VKYI), 72–92 (LFFL…ALKE), and 96–113 (IARI…GNII). Catalysis depends on residues aspartate 124 and aspartate 146. The helical transmembrane segment at 142–162 (FNFADSYVVIGITLFIIYDLF) threads the bilayer.

The protein belongs to the peptidase A8 family.

Its subcellular location is the cell inner membrane. The catalysed reaction is Release of signal peptides from bacterial membrane prolipoproteins. Hydrolyzes -Xaa-Yaa-Zaa-|-(S,diacylglyceryl)Cys-, in which Xaa is hydrophobic (preferably Leu), and Yaa (Ala or Ser) and Zaa (Gly or Ala) have small, neutral side chains.. The protein operates within protein modification; lipoprotein biosynthesis (signal peptide cleavage). Functionally, this protein specifically catalyzes the removal of signal peptides from prolipoproteins. This is Lipoprotein signal peptidase from Borrelia turicatae (strain 91E135).